Here is a 173-residue protein sequence, read N- to C-terminus: Crossover junction endodeoxyribonuclease RuvC (173 aa).

Active-site residues include D8, E67, and D139. Mg(2+) contacts are provided by D8, E67, and D139.

It belongs to the RuvC family. Homodimer which binds Holliday junction (HJ) DNA. The HJ becomes 2-fold symmetrical on binding to RuvC with unstacked arms; it has a different conformation from HJ DNA in complex with RuvA. In the full resolvosome a probable DNA-RuvA(4)-RuvB(12)-RuvC(2) complex forms which resolves the HJ. Mg(2+) serves as cofactor.

The protein resides in the cytoplasm. The catalysed reaction is Endonucleolytic cleavage at a junction such as a reciprocal single-stranded crossover between two homologous DNA duplexes (Holliday junction).. Functionally, the RuvA-RuvB-RuvC complex processes Holliday junction (HJ) DNA during genetic recombination and DNA repair. Endonuclease that resolves HJ intermediates. Cleaves cruciform DNA by making single-stranded nicks across the HJ at symmetrical positions within the homologous arms, yielding a 5'-phosphate and a 3'-hydroxyl group; requires a central core of homology in the junction. The consensus cleavage sequence is 5'-(A/T)TT(C/G)-3'. Cleavage occurs on the 3'-side of the TT dinucleotide at the point of strand exchange. HJ branch migration catalyzed by RuvA-RuvB allows RuvC to scan DNA until it finds its consensus sequence, where it cleaves and resolves the cruciform DNA. The chain is Crossover junction endodeoxyribonuclease RuvC from Sodalis glossinidius (strain morsitans).